The sequence spans 95 residues: Putative septation protein SpoVG (95 aa).

It belongs to the SpoVG family.

In terms of biological role, could be involved in septation. This chain is Putative septation protein SpoVG, found in Clostridium botulinum (strain ATCC 19397 / Type A).